The sequence spans 134 residues: Global transcriptional regulator Spx (134 aa).

The cysteines at positions 10 and 13 are disulfide-linked.

This sequence belongs to the ArsC family. Spx subfamily. Interacts with the C-terminal domain of the alpha subunit of the RNAP.

The protein resides in the cytoplasm. In terms of biological role, global transcriptional regulator that plays a key role in stress response and exerts either positive or negative regulation of genes. Acts by interacting with the C-terminal domain of the alpha subunit of the RNA polymerase (RNAP). This interaction can enhance binding of RNAP to the promoter region of target genes and stimulate their transcription, or block interaction of RNAP with activator. This is Global transcriptional regulator Spx from Streptococcus pyogenes serotype M1.